The primary structure comprises 262 residues: Acyl-[acyl-carrier-protein]--UDP-N-acetylglucosamine O-acyltransferase (262 aa).

The protein belongs to the transferase hexapeptide repeat family. LpxA subfamily. In terms of assembly, homotrimer.

The protein localises to the cytoplasm. It catalyses the reaction a (3R)-hydroxyacyl-[ACP] + UDP-N-acetyl-alpha-D-glucosamine = a UDP-3-O-[(3R)-3-hydroxyacyl]-N-acetyl-alpha-D-glucosamine + holo-[ACP]. The protein operates within glycolipid biosynthesis; lipid IV(A) biosynthesis; lipid IV(A) from (3R)-3-hydroxytetradecanoyl-[acyl-carrier-protein] and UDP-N-acetyl-alpha-D-glucosamine: step 1/6. In terms of biological role, involved in the biosynthesis of lipid A, a phosphorylated glycolipid that anchors the lipopolysaccharide to the outer membrane of the cell. This is Acyl-[acyl-carrier-protein]--UDP-N-acetylglucosamine O-acyltransferase from Cronobacter sakazakii (strain ATCC BAA-894) (Enterobacter sakazakii).